A 493-amino-acid polypeptide reads, in one-letter code: Glycerol kinase (493 aa).

Threonine 11 serves as a coordination point for ADP. Residues threonine 11, threonine 12, and serine 13 each coordinate ATP. A sn-glycerol 3-phosphate-binding site is contributed by threonine 11. Residue arginine 15 participates in ADP binding. Residues arginine 80, glutamate 81, tyrosine 132, and aspartate 241 each contribute to the sn-glycerol 3-phosphate site. Glycerol-binding residues include arginine 80, glutamate 81, tyrosine 132, aspartate 241, and glutamine 242. Threonine 263 and glycine 306 together coordinate ADP. 4 residues coordinate ATP: threonine 263, glycine 306, glutamine 310, and glycine 408. An ADP-binding site is contributed by glycine 408.

It belongs to the FGGY kinase family.

The catalysed reaction is glycerol + ATP = sn-glycerol 3-phosphate + ADP + H(+). It functions in the pathway polyol metabolism; glycerol degradation via glycerol kinase pathway; sn-glycerol 3-phosphate from glycerol: step 1/1. Its activity is regulated as follows. Inhibited by fructose 1,6-bisphosphate (FBP). Key enzyme in the regulation of glycerol uptake and metabolism. Catalyzes the phosphorylation of glycerol to yield sn-glycerol 3-phosphate. The sequence is that of Glycerol kinase from Cereibacter sphaeroides (strain ATCC 17025 / ATH 2.4.3) (Rhodobacter sphaeroides).